The chain runs to 280 residues: 2-dehydro-3-deoxyphosphooctonate aldolase (280 aa).

It belongs to the KdsA family.

The protein resides in the cytoplasm. The catalysed reaction is D-arabinose 5-phosphate + phosphoenolpyruvate + H2O = 3-deoxy-alpha-D-manno-2-octulosonate-8-phosphate + phosphate. It functions in the pathway carbohydrate biosynthesis; 3-deoxy-D-manno-octulosonate biosynthesis; 3-deoxy-D-manno-octulosonate from D-ribulose 5-phosphate: step 2/3. It participates in bacterial outer membrane biogenesis; lipopolysaccharide biosynthesis. The protein is 2-dehydro-3-deoxyphosphooctonate aldolase of Coxiella burnetii (strain Dugway 5J108-111).